The sequence spans 342 residues: C-X-C chemokine receptor type 6 (342 aa).

The Extracellular portion of the chain corresponds to M1–V32. A glycan (N-linked (GlcNAc...) asparagine) is linked at N16. A helical membrane pass occupies residues F33 to Y59. At H60 to V68 the chain is on the cytoplasmic side. Residues F69–Y89 form a helical membrane-spanning segment. Over A90–K103 the chain is Extracellular. The cysteines at positions 102 and 180 are disulfide-linked. Residues S104–V125 form a helical membrane-spanning segment. Topologically, residues D126–K143 are cytoplasmic. A helical transmembrane segment spans residues R144 to L164. Topologically, residues P165–I187 are extracellular. A helical transmembrane segment spans residues S188–I215. Residues K216–K231 are Cytoplasmic-facing. A helical membrane pass occupies residues I232–E259. Topologically, residues Y260 to A275 are extracellular. The helical transmembrane segment at I276–L293 threads the bilayer. The Cytoplasmic segment spans residues K294–L342.

The protein belongs to the G-protein coupled receptor 1 family. In terms of tissue distribution, expressed in lymphoid tissues and activated T cells.

The protein resides in the cell membrane. Its function is as follows. Receptor for the C-X-C chemokine CXCL16. Used as a coreceptor by SIVs and by strains of HIV-2 and m-tropic HIV-1. This chain is C-X-C chemokine receptor type 6 (CXCR6), found in Homo sapiens (Human).